A 475-amino-acid chain; its full sequence is Chromosomal replication initiator protein DnaA (475 aa).

Residues 1–73 (MSDTEQERWS…LSCWQAELPD (73 aa)) form a domain I, interacts with DnaA modulators region. A domain II region spans residues 73 to 131 (DVHRIDLTVRSAMRCAAPVREAPATDARHPERSEGRNGVELKTVATAPASANHDALGGS). Positions 132–354 (PLDPRLTFQS…GAINRLLAHS (223 aa)) are domain III, AAA+ region. The ATP site is built by glycine 179, glycine 181, lysine 182, and threonine 183. Residues 355–475 (KLNAQPVTLE…VELLKRQLQE (121 aa)) are domain IV, binds dsDNA.

It belongs to the DnaA family. Oligomerizes as a right-handed, spiral filament on DNA at oriC.

Its subcellular location is the cytoplasm. Functionally, plays an essential role in the initiation and regulation of chromosomal replication. ATP-DnaA binds to the origin of replication (oriC) to initiate formation of the DNA replication initiation complex once per cell cycle. Binds the DnaA box (a 9 base pair repeat at the origin) and separates the double-stranded (ds)DNA. Forms a right-handed helical filament on oriC DNA; dsDNA binds to the exterior of the filament while single-stranded (ss)DNA is stabiized in the filament's interior. The ATP-DnaA-oriC complex binds and stabilizes one strand of the AT-rich DNA unwinding element (DUE), permitting loading of DNA polymerase. After initiation quickly degrades to an ADP-DnaA complex that is not apt for DNA replication. Binds acidic phospholipids. This Nitrobacter winogradskyi (strain ATCC 25391 / DSM 10237 / CIP 104748 / NCIMB 11846 / Nb-255) protein is Chromosomal replication initiator protein DnaA.